The chain runs to 394 residues: Elongation factor Tu (394 aa).

In terms of domain architecture, tr-type G spans 10–204 (KPHVNVGTIG…ALDSYIPTPE (195 aa)). Residues 19–26 (GHVDHGKT) are G1. Residue 19-26 (GHVDHGKT) participates in GTP binding. T26 provides a ligand contact to Mg(2+). Residues 60–64 (GITIN) form a G2 region. The tract at residues 81–84 (DCPG) is G3. GTP is bound by residues 81 to 85 (DCPGH) and 136 to 139 (NKCD). Positions 136-139 (NKCD) are G4. The interval 174-176 (SAL) is G5.

This sequence belongs to the TRAFAC class translation factor GTPase superfamily. Classic translation factor GTPase family. EF-Tu/EF-1A subfamily. Monomer.

It localises to the cytoplasm. It catalyses the reaction GTP + H2O = GDP + phosphate + H(+). Functionally, GTP hydrolase that promotes the GTP-dependent binding of aminoacyl-tRNA to the A-site of ribosomes during protein biosynthesis. The polypeptide is Elongation factor Tu (Neisseria gonorrhoeae (strain ATCC 700825 / FA 1090)).